The chain runs to 249 residues: Spindlin-4 (249 aa).

Tudor-like domain regions lie at residues 41–90 (VGCR…LELH), 119–168 (VGKA…YTLL), and 201–246 (VGKQ…YGLV). 3 histone H3K4me3 and H3R8me2a binding regions span residues 80 to 85 (GKDSVY), Glu-128, and 237 to 239 (DIH).

It belongs to the SPIN/STSY family. As to quaternary structure, interacts with C11orf84/SPINDOC. Associates with chromatin.

It is found in the cytoplasm. The protein resides in the nucleus. Functionally, binds to acetylated and methylated histones, including H3K4me3 and H4K20me3, probably acting as a histone reader that recognizes chromatin marks to mediate downstream cellular effects. Promotes canonical WNT signaling, and is involved in the down-regulation of cell proliferation. The chain is Spindlin-4 (Spin4) from Mus musculus (Mouse).